A 217-amino-acid polypeptide reads, in one-letter code: 3-isopropylmalate dehydratase small subunit (217 aa).

Belongs to the LeuD family. LeuD type 1 subfamily. In terms of assembly, heterodimer of LeuC and LeuD.

It carries out the reaction (2R,3S)-3-isopropylmalate = (2S)-2-isopropylmalate. It functions in the pathway amino-acid biosynthesis; L-leucine biosynthesis; L-leucine from 3-methyl-2-oxobutanoate: step 2/4. Functionally, catalyzes the isomerization between 2-isopropylmalate and 3-isopropylmalate, via the formation of 2-isopropylmaleate. In Paracidovorax citrulli (strain AAC00-1) (Acidovorax citrulli), this protein is 3-isopropylmalate dehydratase small subunit.